Reading from the N-terminus, the 578-residue chain is Arginine--tRNA ligase (578 aa).

The 'HIGH' region motif lies at 127 to 137 (PNLAKEMHVGH).

The protein belongs to the class-I aminoacyl-tRNA synthetase family. As to quaternary structure, monomer.

The protein localises to the cytoplasm. It carries out the reaction tRNA(Arg) + L-arginine + ATP = L-arginyl-tRNA(Arg) + AMP + diphosphate. The sequence is that of Arginine--tRNA ligase from Pseudomonas putida (strain ATCC 47054 / DSM 6125 / CFBP 8728 / NCIMB 11950 / KT2440).